A 55-amino-acid polypeptide reads, in one-letter code: ATP synthase F(0) complex subunit 8 (55 aa).

The helical transmembrane segment at 7 to 24 (APWFSIMIMTWLTLALLI) threads the bilayer. The tract at residues 34 to 55 (TNPPSSKPSLTTKPTPWAWPWT) is disordered.

Belongs to the ATPase protein 8 family. As to quaternary structure, component of the ATP synthase complex composed at least of ATP5F1A/subunit alpha, ATP5F1B/subunit beta, ATP5MC1/subunit c (homooctomer), MT-ATP6/subunit a, MT-ATP8/subunit 8, ATP5ME/subunit e, ATP5MF/subunit f, ATP5MG/subunit g, ATP5MK/subunit k, ATP5MJ/subunit j, ATP5F1C/subunit gamma, ATP5F1D/subunit delta, ATP5F1E/subunit epsilon, ATP5PF/subunit F6, ATP5PB/subunit b, ATP5PD/subunit d, ATP5PO/subunit OSCP. ATP synthase complex consists of a soluble F(1) head domain (subunits alpha(3) and beta(3)) - the catalytic core - and a membrane F(0) domain - the membrane proton channel (subunits c, a, 8, e, f, g, k and j). These two domains are linked by a central stalk (subunits gamma, delta, and epsilon) rotating inside the F1 region and a stationary peripheral stalk (subunits F6, b, d, and OSCP).

The protein localises to the mitochondrion membrane. Its function is as follows. Subunit 8, of the mitochondrial membrane ATP synthase complex (F(1)F(0) ATP synthase or Complex V) that produces ATP from ADP in the presence of a proton gradient across the membrane which is generated by electron transport complexes of the respiratory chain. ATP synthase complex consist of a soluble F(1) head domain - the catalytic core - and a membrane F(1) domain - the membrane proton channel. These two domains are linked by a central stalk rotating inside the F(1) region and a stationary peripheral stalk. During catalysis, ATP synthesis in the catalytic domain of F(1) is coupled via a rotary mechanism of the central stalk subunits to proton translocation. In vivo, can only synthesize ATP although its ATP hydrolase activity can be activated artificially in vitro. Part of the complex F(0) domain. This is ATP synthase F(0) complex subunit 8 from Aythya americana (Redhead).